The primary structure comprises 279 residues: Thiazole synthase (279 aa).

The Schiff-base intermediate with DXP role is filled by lysine 116. 1-deoxy-D-xylulose 5-phosphate-binding positions include glycine 177, 203 to 204 (AG), and 225 to 226 (NS).

The protein belongs to the ThiG family. As to quaternary structure, homotetramer. Forms heterodimers with either ThiH or ThiS.

It localises to the cytoplasm. It catalyses the reaction [ThiS sulfur-carrier protein]-C-terminal-Gly-aminoethanethioate + 2-iminoacetate + 1-deoxy-D-xylulose 5-phosphate = [ThiS sulfur-carrier protein]-C-terminal Gly-Gly + 2-[(2R,5Z)-2-carboxy-4-methylthiazol-5(2H)-ylidene]ethyl phosphate + 2 H2O + H(+). The protein operates within cofactor biosynthesis; thiamine diphosphate biosynthesis. Catalyzes the rearrangement of 1-deoxy-D-xylulose 5-phosphate (DXP) to produce the thiazole phosphate moiety of thiamine. Sulfur is provided by the thiocarboxylate moiety of the carrier protein ThiS. In vitro, sulfur can be provided by H(2)S. In Trichodesmium erythraeum (strain IMS101), this protein is Thiazole synthase.